The primary structure comprises 1201 residues: Transcription-repair-coupling factor (1201 aa).

The disordered stretch occupies residues 1-27 (MRLLITLGPSGSTHGHSLHTDAGRRRG). A Helicase ATP-binding domain is found at 670 to 831 (DMQKPEPMDR…MSGVRDMSII (162 aa)). 683–690 (GDVGYGKT) is an ATP binding site. Residues 784-787 (DEEQ) carry the DEEQ box motif. The region spanning 852–1006 (VVKEAIEREV…GFSIASHDLE (155 aa)) is the Helicase C-terminal domain.

This sequence in the N-terminal section; belongs to the UvrB family. In the C-terminal section; belongs to the helicase family. RecG subfamily.

It is found in the cytoplasm. Couples transcription and DNA repair by recognizing RNA polymerase (RNAP) stalled at DNA lesions. Mediates ATP-dependent release of RNAP and its truncated transcript from the DNA, and recruitment of nucleotide excision repair machinery to the damaged site. The sequence is that of Transcription-repair-coupling factor from Myxococcus xanthus.